A 241-amino-acid chain; its full sequence is Ribosomal RNA small subunit methyltransferase G (241 aa).

Residues glycine 79, phenylalanine 84, 130–131, and arginine 150 contribute to the S-adenosyl-L-methionine site; that span reads AE.

The protein belongs to the methyltransferase superfamily. RNA methyltransferase RsmG family.

The protein resides in the cytoplasm. In terms of biological role, specifically methylates the N7 position of a guanine in 16S rRNA. This is Ribosomal RNA small subunit methyltransferase G from Ligilactobacillus salivarius (strain UCC118) (Lactobacillus salivarius).